Consider the following 62-residue polypeptide: UPF0291 protein CLK_1994 (62 aa).

This sequence belongs to the UPF0291 family.

The protein localises to the cytoplasm. The sequence is that of UPF0291 protein CLK_1994 from Clostridium botulinum (strain Loch Maree / Type A3).